The chain runs to 96 residues: uncharacterized protein (96 aa).

The N-terminal stretch at 1-28 (MNKKAIVGIFMSILMAGLVGCAGSSDAQ) is a signal peptide.

This is an uncharacterized protein from Butyrivibrio fibrisolvens.